A 599-amino-acid polypeptide reads, in one-letter code: Sulfite reductase [NADPH] flavoprotein alpha-component (599 aa).

The Flavodoxin-like domain maps to 64–202 (ITIISASQTG…AASEWRARVV (139 aa)). FMN is bound by residues 70–75 (SQTGNA), 117–120 (STQG), and 153–162 (LGDSSYEFFC). The FAD-binding FR-type domain occupies 234–448 (DAPLVASLSV…IEHNDNFRLP (215 aa)). FAD contacts are provided by residues T322, A356, 386-389 (RLYS), 404-406 (TVG), Y410, and 419-422 (GGAS). Residues 519-520 (SR), 525-529 (KVYVQ), and D561 each bind NADP(+). Y599 contacts FAD.

The protein belongs to the NADPH-dependent sulphite reductase flavoprotein subunit CysJ family. This sequence in the N-terminal section; belongs to the flavodoxin family. In the C-terminal section; belongs to the flavoprotein pyridine nucleotide cytochrome reductase family. As to quaternary structure, alpha(8)-beta(8). The alpha component is a flavoprotein, the beta component is a hemoprotein. Requires FAD as cofactor. It depends on FMN as a cofactor.

The catalysed reaction is hydrogen sulfide + 3 NADP(+) + 3 H2O = sulfite + 3 NADPH + 4 H(+). It participates in sulfur metabolism; hydrogen sulfide biosynthesis; hydrogen sulfide from sulfite (NADPH route): step 1/1. In terms of biological role, component of the sulfite reductase complex that catalyzes the 6-electron reduction of sulfite to sulfide. This is one of several activities required for the biosynthesis of L-cysteine from sulfate. The flavoprotein component catalyzes the electron flow from NADPH -&gt; FAD -&gt; FMN to the hemoprotein component. This chain is Sulfite reductase [NADPH] flavoprotein alpha-component, found in Shigella flexneri serotype 5b (strain 8401).